The following is a 394-amino-acid chain: Elongation factor Tu (394 aa).

Residues 10–204 (KEHANIGTIG…AVDTYIPTPE (195 aa)) form the tr-type G domain. Positions 19–26 (GHVDHGKT) are G1. 19–26 (GHVDHGKT) serves as a coordination point for GTP. Thr-26 lines the Mg(2+) pocket. Positions 60–64 (GITIN) are G2. The interval 81–84 (DCPG) is G3. GTP-binding positions include 81–85 (DCPGH) and 136–139 (NKVD). Residues 136 to 139 (NKVD) are G4. A G5 region spans residues 174-176 (SAL).

This sequence belongs to the TRAFAC class translation factor GTPase superfamily. Classic translation factor GTPase family. EF-Tu/EF-1A subfamily. Monomer.

It is found in the cytoplasm. The catalysed reaction is GTP + H2O = GDP + phosphate + H(+). In terms of biological role, GTP hydrolase that promotes the GTP-dependent binding of aminoacyl-tRNA to the A-site of ribosomes during protein biosynthesis. This chain is Elongation factor Tu, found in Staphylococcus aureus (strain COL).